The primary structure comprises 175 residues: Viral interleukin-10 homolog (175 aa).

An N-terminal signal peptide occupies residues 1-19; the sequence is MLSVMVSSSLVLIVFFLGA. 2 cysteine pairs are disulfide-bonded: cysteine 37–cysteine 127 and cysteine 81–cysteine 132. Residue asparagine 151 is glycosylated (N-linked (GlcNAc...) asparagine; by host).

Belongs to the IL-10 family. In terms of assembly, homodimer; disulfide-linked.

It localises to the secreted. Its function is as follows. Functional viral IL-10 homolog. Can bind to the human IL-10 receptor and compete with human IL-10 for binding sites. Requires both subunits of the human IL-10 receptor complex to induce signal transduction events and biological activities. IL-10 signaling pathway has several immunosuppressive activities that are exploited by the virus. Inhibits TLR-induced type I interferon production in host plasmacytoid dendritic cells. The polypeptide is Viral interleukin-10 homolog (UL111A) (Human cytomegalovirus (strain AD169) (HHV-5)).